The sequence spans 55 residues: Large ribosomal subunit protein bL33 (55 aa).

Belongs to the bacterial ribosomal protein bL33 family.

The protein is Large ribosomal subunit protein bL33 of Bordetella avium (strain 197N).